A 373-amino-acid polypeptide reads, in one-letter code: 3-isopropylmalate dehydrogenase AMT6 (373 aa).

77–79 lines the NADP(+) pocket; sequence VGG. Arginine 97 and arginine 136 together coordinate substrate. Residues aspartate 227, aspartate 252, and aspartate 256 each contribute to the Mg(2+) site. Position 284–289 (284–289) interacts with NADP(+); that stretch reads SRIRGL.

Belongs to the isocitrate and isopropylmalate dehydrogenases family. In terms of assembly, homodimer. Mg(2+) serves as cofactor. It depends on Mn(2+) as a cofactor.

The enzyme catalyses (2R,3S)-3-isopropylmalate + NAD(+) = 4-methyl-2-oxopentanoate + CO2 + NADH. Its pathway is amino-acid biosynthesis; L-leucine biosynthesis; L-leucine from 3-methyl-2-oxobutanoate: step 3/4. It functions in the pathway mycotoxin biosynthesis. In terms of biological role, 3-isopropylmalate dehydrogenase; part of the gene clusters that mediate the biosynthesis of AM-toxins, host-selective toxins (HSTs) causing Alternaria blotch on apple, a worldwide distributed disease. AM-toxins are cyclic depsipeptides containing the 3 residues 2-hydroxy-isovaleric acid (2-HIV), dehydroalanine, L-alanine which are common for all 3 AM-toxins I to III. The fourth precursor is L-alpha-amino-methoxyphenyl-valeric acid (L-Amv) for AM-toxin I, L-alpha-amino-phenyl-valeric acid (L-Apv) for AM-toxin II, and L-alpha-amino-hydroxyphenyl-valeric acid (L-Ahv) for AM-toxin III. AM-toxins have two target sites for affecting susceptible apple cells; they cause invagination of the plasma membrane and electrolyte loss and chloroplast disorganization. The non-ribosomal peptide synthetase AMT1 contains 4 catalytic modules and is responsible for activation of each residue in AM-toxin. The aldo-keto reductase AMT2 catalyzes the conversion of 2-keto-isovaleric acid (2-KIV) to 2-hydroxy-isovaleric acid (2-HIV), one of the precursor residues incorporated by AMT1 during AM-toxin biosynthesis, by reduction of its ketone to an alcohol. The cytochrome P450 monooxygenase AMT3 and the thioesterase AMT4 are also important for AM-toxin production, but their exact function within the AM-toxin biosynthesis are not known yet. Up to 21 proteins (including AMT1 to AMT4) are predicted to be involved in AM-toxin biosynthesis since their expression ishighly up-regulated in AM-toxin-producing cultures. The chain is 3-isopropylmalate dehydrogenase AMT6 from Alternaria alternata (Alternaria rot fungus).